Here is a 201-residue protein sequence, read N- to C-terminus: Akirin-2 (201 aa).

A phosphoserine mark is found at serine 18 and serine 21. A Nuclear localization signal motif is present at residues 22–27 (PKRRRC). Serine 55 bears the Phosphoserine mark. The short motif at 198–201 (SYVS) is the SYVS motif element.

Belongs to the akirin family. Homodimer. Interacts with IPO9; the interaction is direct. Associates with 20S and 26S proteasomes. Interacts with SMARCD1; promoting SWI/SNF complex recruitment. Interacts with NFKBIZ. Interacts with YWHAB. In terms of processing, polyubiquitinated. Polyubiquitination is dependent of UBR5 that extends pre-ubiquitinated AKIRIN2. As to expression, highly expressed in testis, cerebrum and cerebellum, and barely detectable in liver, heart, spleen and muscle. Also highly expressed in various tumor cells from hepatoma, glioblastoma and pheochromocytoma.

The protein resides in the nucleus. The protein localises to the cytoplasm. It is found in the membrane. In terms of biological role, molecular adapter that acts as a bridge between a variety of multiprotein complexes, and which is involved in embryonic development, immunity, myogenesis and brain development. Plays a key role in nuclear protein degradation by promoting import of proteasomes into the nucleus: directly binds to fully assembled 20S proteasomes at one end and to nuclear import receptor IPO9 at the other end, bridging them together and mediating the import of pre-assembled proteasome complexes through the nuclear pore. Involved in innate immunity by regulating the production of interleukin-6 (IL6) downstream of Toll-like receptor (TLR): acts by bridging the NF-kappa-B inhibitor NFKBIZ and the SWI/SNF complex, leading to promote induction of IL6. Also involved in adaptive immunity by promoting B-cell activation. Involved in brain development: required for the survival and proliferation of cerebral cortical progenitor cells. Involved in myogenesis: required for skeletal muscle formation and skeletal development, possibly by regulating expression of muscle differentiation factors. Also plays a role in facilitating interdigital tissue regression during limb development. The polypeptide is Akirin-2 (Rattus norvegicus (Rat)).